The sequence spans 259 residues: Emerin (259 aa).

N-acetylmethionine is present on M1. The LEM domain occupies 1–45; it reads MDDYAVLSDTELAAVLRQYNIPHGPIVGSTRKLYEKKIFEYETQR. Phosphoserine occurs at positions 8, 29, 54, 72, 88, 99, 141, and 142. The interval 46–223 is interaction with F-actin; sequence RRLLPPNSSS…PAAALGQDRQ (178 aa). Y161 carries the phosphotyrosine modification. The interaction with CTNNB1 stretch occupies residues 168 to 187; it reads RPISNVSRSSLGLSYYPTSS. S171, S174, and S176 each carry phosphoserine. A helical transmembrane segment spans residues 224-244; the sequence is VPLWGQLLLFLVFAAFLLFVY.

As to quaternary structure, interacts with lamins A and C, BANF1, GMCL, BCLAF1 and YTHDC1/YT521. Interacts with TMEM43; the interaction retains emerin in the inner nuclear membrane. Interacts with ACTB, SPTAN1, F-actin, CTNNB1 and beta-tubulin. Interacts with SUN1 and SUN2. Interacts with TMEM201. Interacts with NEMP1. In terms of tissue distribution, in the ovary, highest expression is seen in primordial follicle oocytes (at protein level). Detected in embryonic fibroblasts, skeletal muscle, heart muscle and tongue epithelium (at protein level). Widely expressed.

It localises to the nucleus inner membrane. The protein resides in the nucleus outer membrane. Its function is as follows. Stabilizes and promotes the formation of a nuclear actin cortical network. Stimulates actin polymerization in vitro by binding and stabilizing the pointed end of growing filaments. Inhibits beta-catenin activity by preventing its accumulation in the nucleus. Acts by influencing the nuclear accumulation of beta-catenin through a CRM1-dependent export pathway. Links centrosomes to the nuclear envelope via a microtubule association. Required for proper localization of non-farnesylated prelamin-A/C. Together with NEMP1, contributes to nuclear envelope stiffness in germ cells. This Mus musculus (Mouse) protein is Emerin (Emd).